The primary structure comprises 187 residues: Flavin prenyltransferase UbiX (187 aa).

FMN contacts are provided by residues 9–11, S34, and R123; that span reads GAS. 2 residues coordinate dimethylallyl phosphate: Y153 and K169.

The protein belongs to the UbiX/PAD1 family.

It carries out the reaction dimethylallyl phosphate + FMNH2 = prenylated FMNH2 + phosphate. In terms of biological role, flavin prenyltransferase that catalyzes the synthesis of the prenylated FMN cofactor (prenyl-FMN) for 4-hydroxy-3-polyprenylbenzoic acid decarboxylase UbiD. The prenyltransferase is metal-independent and links a dimethylallyl moiety from dimethylallyl monophosphate (DMAP) to the flavin N5 and C6 atoms of FMN. The polypeptide is Flavin prenyltransferase UbiX (Helicobacter pylori (strain J99 / ATCC 700824) (Campylobacter pylori J99)).